Consider the following 149-residue polypeptide: Ribonuclease HI (149 aa).

Residues 1–140 enclose the RNase H type-1 domain; the sequence is MIIGYFDGLC…AYELVRRGKL (140 aa). Residues aspartate 7, glutamate 52, aspartate 76, and aspartate 125 each coordinate Mg(2+). Mn(2+) is bound by residues aspartate 7, glutamate 52, aspartate 76, and aspartate 125. The cysteines at positions 58 and 145 are disulfide-linked.

In terms of assembly, monomer. Mn(2+) serves as cofactor. Requires Mg(2+) as cofactor. Co(2+) is required as a cofactor. The cofactor is Ni(2+). The disulfide bond confers considerable stability to the protein.

Its subcellular location is the cytoplasm. The enzyme catalyses Endonucleolytic cleavage to 5'-phosphomonoester.. Functionally, nuclease that specifically degrades the RNA of RNA-DNA hybrids. Endonucleolytically removes RNA primers from the Okazaki fragments of lagging strand synthesis on its own. In the presence of Mn(2+) or Co(2+) can also cleave an RNA-RNA hybrid; the dsRNase activity is 10- 100-fold lower than RNase H activity. Complements the temperature-sensitive phenotype of an E.coli double rnhA/rnhB (RNase H) disruption mutant. This chain is Ribonuclease HI (rnhA), found in Sulfurisphaera tokodaii (strain DSM 16993 / JCM 10545 / NBRC 100140 / 7) (Sulfolobus tokodaii).